The following is a 284-amino-acid chain: GPN-loop GTPase 3 (284 aa).

13-18 (GSGKST) lines the GTP pocket. The Gly-Pro-Asn (GPN)-loop; involved in dimer interface signature appears at 72-74 (GPN). Position 174 to 177 (174 to 177 (TKMD)) interacts with GTP. The tract at residues 262-284 (EPREHEEESSSMFDEYFQERQNE) is disordered.

The protein belongs to the GPN-loop GTPase family. As to quaternary structure, heterodimer with GPN1. Binds to RNA polymerase II (RNAPII). Interacts directly with subunits RPB4 and RPB7 and the CTD of RPB1.

In terms of biological role, small GTPase required for proper localization of RNA polymerase II (RNAPII). May act at an RNAP assembly step prior to nuclear import. This chain is GPN-loop GTPase 3, found in Mus musculus (Mouse).